A 261-amino-acid polypeptide reads, in one-letter code: Indole-3-glycerol phosphate synthase (261 aa).

The protein belongs to the TrpC family.

It carries out the reaction 1-(2-carboxyphenylamino)-1-deoxy-D-ribulose 5-phosphate + H(+) = (1S,2R)-1-C-(indol-3-yl)glycerol 3-phosphate + CO2 + H2O. The protein operates within amino-acid biosynthesis; L-tryptophan biosynthesis; L-tryptophan from chorismate: step 4/5. The protein is Indole-3-glycerol phosphate synthase of Burkholderia ambifaria (strain MC40-6).